The sequence spans 689 residues: DNA ligase (689 aa).

Residues 51-55, 100-101, and E129 contribute to the NAD(+) site; these read DSEYD and SL. K131 acts as the N6-AMP-lysine intermediate in catalysis. Residues R152, E189, K308, and K332 each contribute to the NAD(+) site. 4 residues coordinate Zn(2+): C426, C429, C444, and C450. One can recognise a BRCT domain in the interval 609–689; the sequence is ADEQPLKGQT…ELLALLAANS (81 aa).

Belongs to the NAD-dependent DNA ligase family. LigA subfamily. Mg(2+) is required as a cofactor. Mn(2+) serves as cofactor.

The enzyme catalyses NAD(+) + (deoxyribonucleotide)n-3'-hydroxyl + 5'-phospho-(deoxyribonucleotide)m = (deoxyribonucleotide)n+m + AMP + beta-nicotinamide D-nucleotide.. In terms of biological role, DNA ligase that catalyzes the formation of phosphodiester linkages between 5'-phosphoryl and 3'-hydroxyl groups in double-stranded DNA using NAD as a coenzyme and as the energy source for the reaction. It is essential for DNA replication and repair of damaged DNA. This Shewanella sp. (strain ANA-3) protein is DNA ligase.